The chain runs to 347 residues: 5-deoxyribose 1-phosphate isomerase (347 aa).

Residues 48-50 (RGA), arginine 91, and glutamine 198 each bind substrate. Residue aspartate 239 is the Proton donor of the active site. 249–250 (NK) is a substrate binding site.

Belongs to the EIF-2B alpha/beta/delta subunits family. DrdI subfamily.

It catalyses the reaction 5-deoxy-alpha-D-ribose 1-phosphate = 5-deoxy-D-ribulose 1-phosphate. The protein operates within carbohydrate degradation. Catalyzes the isomerization of 5-deoxy-alpha-D-ribose 1-phosphate to 5-deoxy-D-ribulose 1-phosphate, as part of a 5-deoxyribose salvage pathway that recycles this toxic radical SAM enzyme by-product to mainstream metabolites. The protein is 5-deoxyribose 1-phosphate isomerase of Bacillus thuringiensis (strain Al Hakam).